The following is a 206-amino-acid chain: Small ribosomal subunit protein uS4 (206 aa).

Residues 96 to 156 (GRLDNVVYRM…EKAKKQSRVK (61 aa)) form the S4 RNA-binding domain.

This sequence belongs to the universal ribosomal protein uS4 family. As to quaternary structure, part of the 30S ribosomal subunit. Contacts protein S5. The interaction surface between S4 and S5 is involved in control of translational fidelity.

Functionally, one of the primary rRNA binding proteins, it binds directly to 16S rRNA where it nucleates assembly of the body of the 30S subunit. In terms of biological role, with S5 and S12 plays an important role in translational accuracy. The sequence is that of Small ribosomal subunit protein uS4 from Salmonella agona (strain SL483).